A 211-amino-acid chain; its full sequence is Tudor-interacting repair regulator protein (211 aa).

Glycyl lysine isopeptide (Lys-Gly) (interchain with G-Cter in ubiquitin) cross-links involve residues Lys10 and Lys151. An interaction with PXN region spans residues 118–205 (TLEQLHAVEI…TEKQKKALEK (88 aa)).

It belongs to the Nudix hydrolase family. TIRR subfamily. As to quaternary structure, homodimer. Interacts with TP53BP1 (via the Tudor-like domain); interaction is abolished following DNA damage and TP53BP1 phosphorylation by ATM. Interacts (via the cytoplasmic part) with SDC4. Interacts with TGFB1I1 and PXN.

Its subcellular location is the nucleus. Functionally, key regulator of TP53BP1 required to stabilize TP53BP1 and regulate its recruitment to chromatin. In absence of DNA damage, interacts with the tandem Tudor-like domain of TP53BP1, masking the region that binds histone H4 dimethylated at 'Lys-20' (H4K20me2), thereby preventing TP53BP1 recruitment to chromatin and maintaining TP53BP1 localization to the nucleus. Following DNA damage, ATM-induced phosphorylation of TP53BP1 and subsequent recruitment of RIF1 leads to dissociate NUDT16L1/TIRR from TP53BP1, unmasking the tandem Tudor-like domain and allowing recruitment of TP53BP1 to DNA double strand breaks (DSBs). Binds U8 snoRNA. The sequence is that of Tudor-interacting repair regulator protein from Mus musculus (Mouse).